A 391-amino-acid polypeptide reads, in one-letter code: Imidazolonepropionase (391 aa).

Fe(3+) is bound by residues H72 and H74. H72 and H74 together coordinate Zn(2+). 3 residues coordinate 4-imidazolone-5-propanoate: R81, Y139, and H166. Y139 provides a ligand contact to N-formimidoyl-L-glutamate. A Fe(3+)-binding site is contributed by H229. H229 is a Zn(2+) binding site. Residue Q232 participates in 4-imidazolone-5-propanoate binding. D303 serves as a coordination point for Fe(3+). Residue D303 participates in Zn(2+) binding. The N-formimidoyl-L-glutamate site is built by N305 and G307. S308 lines the 4-imidazolone-5-propanoate pocket.

The protein belongs to the metallo-dependent hydrolases superfamily. HutI family. It depends on Zn(2+) as a cofactor. Fe(3+) is required as a cofactor.

The protein localises to the cytoplasm. The catalysed reaction is 4-imidazolone-5-propanoate + H2O = N-formimidoyl-L-glutamate. The protein operates within amino-acid degradation; L-histidine degradation into L-glutamate; N-formimidoyl-L-glutamate from L-histidine: step 3/3. Catalyzes the hydrolytic cleavage of the carbon-nitrogen bond in imidazolone-5-propanoate to yield N-formimidoyl-L-glutamate. It is the third step in the universal histidine degradation pathway. The chain is Imidazolonepropionase from Streptomyces coelicolor (strain ATCC BAA-471 / A3(2) / M145).